The sequence spans 275 residues: 4-hydroxy-tetrahydrodipicolinate reductase (275 aa).

NAD(+) is bound by residues 8-13, 100-102, and 126-129; these read GATGRM, GTT, and SPNM. Histidine 160 functions as the Proton donor/acceptor in the catalytic mechanism. Residue histidine 161 participates in (S)-2,3,4,5-tetrahydrodipicolinate binding. Lysine 164 (proton donor) is an active-site residue. Position 170 to 171 (170 to 171) interacts with (S)-2,3,4,5-tetrahydrodipicolinate; that stretch reads GT.

The protein belongs to the DapB family.

Its subcellular location is the cytoplasm. It carries out the reaction (S)-2,3,4,5-tetrahydrodipicolinate + NAD(+) + H2O = (2S,4S)-4-hydroxy-2,3,4,5-tetrahydrodipicolinate + NADH + H(+). It catalyses the reaction (S)-2,3,4,5-tetrahydrodipicolinate + NADP(+) + H2O = (2S,4S)-4-hydroxy-2,3,4,5-tetrahydrodipicolinate + NADPH + H(+). Its pathway is amino-acid biosynthesis; L-lysine biosynthesis via DAP pathway; (S)-tetrahydrodipicolinate from L-aspartate: step 4/4. Its function is as follows. Catalyzes the conversion of 4-hydroxy-tetrahydrodipicolinate (HTPA) to tetrahydrodipicolinate. The polypeptide is 4-hydroxy-tetrahydrodipicolinate reductase (Methanopyrus kandleri (strain AV19 / DSM 6324 / JCM 9639 / NBRC 100938)).